Reading from the N-terminus, the 148-residue chain is Macrodomain Ter protein (148 aa).

The protein belongs to the MatP family. As to quaternary structure, homodimer.

The protein resides in the cytoplasm. Required for spatial organization of the terminus region of the chromosome (Ter macrodomain) during the cell cycle. Prevents early segregation of duplicated Ter macrodomains during cell division. Binds specifically to matS, which is a 13 bp signature motif repeated within the Ter macrodomain. The sequence is that of Macrodomain Ter protein from Haemophilus influenzae (strain ATCC 51907 / DSM 11121 / KW20 / Rd).